The sequence spans 371 residues: Leu/Ile/Val-binding protein homolog 1 (371 aa).

The first 23 residues, 1–23, serve as a signal peptide directing secretion; that stretch reads MRKTLFSGVALAAVIAFGGSAWA.

It belongs to the leucine-binding protein family.

Its function is as follows. Component of an amino-acid transport system. The polypeptide is Leu/Ile/Val-binding protein homolog 1 (Brucella melitensis biotype 1 (strain ATCC 23456 / CCUG 17765 / NCTC 10094 / 16M)).